A 416-amino-acid chain; its full sequence is MLRKKFLYSSAIYATSLASIIAFVAAGCGQTESGSTSDSKPQAETLKHKVSNDSIRIALTDPDNPRWISAQKDIISYVDETEAATSTITKNQDAQNNWLTQQANLSPAPKGFIIAPENGSGVGTAVNTIADKGIPIVAYDRLITGSDKYDWYVSFDNEKVGELQGLSLAAGLLGKEDGAFDSIDQMNEYLKSHMPQETISFYTIAGSQDDNNSQYFYNGAMKVLKELMKNSQNKIIDLSPEGENAVYVPGWNYGTAGQRIQSFLTINKDPAGGNKIKAVGSKPASIFKGFLAPNDGMAEQAITKLKLEGFDTQKIFVTGQDYNDKAKTFIKDGDQNMTIYKPDKVLGKVAVEVLRVLIAKKNKASRSEVENELKAKLPNISFKYDNQTYKVQGKNINTILVSPVIVTKANVDNPDA.

The signal sequence occupies residues 1–27 (MLRKKFLYSSAIYATSLASIIAFVAAG). Cys28 is lipidated: N-palmitoyl cysteine. Cys28 is lipidated: S-diacylglycerol cysteine.

The protein resides in the cell membrane. In Mesomycoplasma hyopneumoniae (strain 232) (Mycoplasma hyopneumoniae), this protein is 46 kDa surface antigen (p46).